The sequence spans 248 residues: UDP-2,3-diacylglucosamine hydrolase (248 aa).

Residues D7, H9, D40, N78, and H113 each coordinate Mn(2+). 78–79 (NR) serves as a coordination point for substrate. Residues D121, S159, T163, K166, and H194 each contribute to the substrate site. 2 residues coordinate Mn(2+): H194 and H196.

It belongs to the LpxH family. Mn(2+) serves as cofactor.

Its subcellular location is the cell inner membrane. The enzyme catalyses UDP-2-N,3-O-bis[(3R)-3-hydroxytetradecanoyl]-alpha-D-glucosamine + H2O = 2-N,3-O-bis[(3R)-3-hydroxytetradecanoyl]-alpha-D-glucosaminyl 1-phosphate + UMP + 2 H(+). It functions in the pathway glycolipid biosynthesis; lipid IV(A) biosynthesis; lipid IV(A) from (3R)-3-hydroxytetradecanoyl-[acyl-carrier-protein] and UDP-N-acetyl-alpha-D-glucosamine: step 4/6. Its function is as follows. Hydrolyzes the pyrophosphate bond of UDP-2,3-diacylglucosamine to yield 2,3-diacylglucosamine 1-phosphate (lipid X) and UMP by catalyzing the attack of water at the alpha-P atom. Involved in the biosynthesis of lipid A, a phosphorylated glycolipid that anchors the lipopolysaccharide to the outer membrane of the cell. The polypeptide is UDP-2,3-diacylglucosamine hydrolase (Pseudomonas fluorescens (strain Pf0-1)).